Reading from the N-terminus, the 403-residue chain is CCA-adding enzyme (403 aa).

ATP is bound by residues G32 and R35. CTP is bound by residues G32 and R35. Residues D45 and D47 each coordinate Mg(2+). The ATP site is built by R116, D159, R162, R165, and R168. CTP is bound by residues R116, D159, R162, R165, and R168.

It belongs to the tRNA nucleotidyltransferase/poly(A) polymerase family. Bacterial CCA-adding enzyme type 3 subfamily. As to quaternary structure, homodimer. Mg(2+) is required as a cofactor.

It catalyses the reaction a tRNA precursor + 2 CTP + ATP = a tRNA with a 3' CCA end + 3 diphosphate. The catalysed reaction is a tRNA with a 3' CCA end + 2 CTP + ATP = a tRNA with a 3' CCACCA end + 3 diphosphate. Its function is as follows. Catalyzes the addition and repair of the essential 3'-terminal CCA sequence in tRNAs without using a nucleic acid template. Adds these three nucleotides in the order of C, C, and A to the tRNA nucleotide-73, using CTP and ATP as substrates and producing inorganic pyrophosphate. tRNA 3'-terminal CCA addition is required both for tRNA processing and repair. Also involved in tRNA surveillance by mediating tandem CCA addition to generate a CCACCA at the 3' terminus of unstable tRNAs. While stable tRNAs receive only 3'-terminal CCA, unstable tRNAs are marked with CCACCA and rapidly degraded. The polypeptide is CCA-adding enzyme (Streptococcus suis (strain 98HAH33)).